The following is a 440-amino-acid chain: MAAVRSGLVDIFVQGQWHRVLATLDPTAITLQTMEQNEAEAEKRTVRVVKYDGNGLGISIKGGRDNNMPIVISKIFKGMAADQAGELFLDDVIISVNGENLLDASHEEAVRALKRAGRVVDLQVQYRREDMMHRENIVENVEWDDDIRERVRTIGLKLAYVARAGIDADAEGRILEMRSPSGRYSLAMRCSSSEEADGWFEALHACTTCLLTQALAQVNIMLGNNPQVRHMGWIAEQVSENGISMWKPKFMTLTNSEILFYEAVPQLKAEWAEPRLVRPLVATRVVQTSSRTAPVIKGLTDVISFRMRTGTQQGVRTHTIRVETHAELARWVRAVVIGGYEACLSTSQVSAPCLWRGESCELIVNLDNGISLLSSTGEVLWQHSFETIRATGDDGGRFLWVDFGPPHGEQELDLLNSAKPVVFILHSFLATKVYRLGLYA.

2 consecutive PH domains span residues 2–208 (AAVR…ACTT) and 227–340 (QVRH…IGGY). The region spanning 45-128 (TVRVVKYDGN…VVDLQVQYRR (84 aa)) is the PDZ domain. An SU domain is found at 384–440 (SFETIRATGDDGGRFLWVDFGPPHGEQELDLLNSAKPVVFILHSFLATKVYRLGLYA).

It belongs to the syntrophin family. As to quaternary structure, component of the dystrophin glycoprotein complex (DGC). Interacts with dyb-1, dys-1 and snf-6 to form the DGC. As to expression, expressed in neurons and muscles; particularly strong expression in the body wall, head and vulval muscles, and in ventral nerve cord (at protein level).

It localises to the membrane. It is found in the cytoplasm. The protein resides in the cytoskeleton. In terms of biological role, adapter protein that binds to and probably organizes the subcellular localization of a variety of membrane proteins. May link various receptors to the actin cytoskeleton and the dystrophin glycoprotein complex (DGC). May also act by slowing calcium channel activity via a direct or indirect mechanism potentially involving other second messengers. Plays an early role in the formation of the neuromuscular junction and is necessary for muscle maintenance. The protein is Syntrophin-1 of Caenorhabditis elegans.